The chain runs to 61 residues: Small ribosomal subunit protein uS14 (61 aa).

Zn(2+)-binding residues include Cys24, Cys27, Cys40, and Cys43.

It belongs to the universal ribosomal protein uS14 family. Zinc-binding uS14 subfamily. In terms of assembly, part of the 30S ribosomal subunit. Contacts proteins S3 and S10. Requires Zn(2+) as cofactor.

In terms of biological role, binds 16S rRNA, required for the assembly of 30S particles and may also be responsible for determining the conformation of the 16S rRNA at the A site. In Geobacter sp. (strain M21), this protein is Small ribosomal subunit protein uS14.